The primary structure comprises 360 residues: Phospho-N-acetylmuramoyl-pentapeptide-transferase (360 aa).

A run of 10 helical transmembrane segments spans residues 21-41, 74-94, 97-117, 135-155, 168-188, 199-219, 236-256, 263-283, 288-308, and 338-358; these read YVTF…LWWG, MGGI…GDLA, YVWV…IDDY, ILQS…ADLV, IMPQ…VGSS, GLAI…AYLS, AGEL…FLWF, VFMG…IAVL, ILLV…ILQV, and VIVR…ATLK.

This sequence belongs to the glycosyltransferase 4 family. MraY subfamily. The cofactor is Mg(2+).

It localises to the cell inner membrane. The catalysed reaction is UDP-N-acetyl-alpha-D-muramoyl-L-alanyl-gamma-D-glutamyl-meso-2,6-diaminopimeloyl-D-alanyl-D-alanine + di-trans,octa-cis-undecaprenyl phosphate = di-trans,octa-cis-undecaprenyl diphospho-N-acetyl-alpha-D-muramoyl-L-alanyl-D-glutamyl-meso-2,6-diaminopimeloyl-D-alanyl-D-alanine + UMP. It functions in the pathway cell wall biogenesis; peptidoglycan biosynthesis. In terms of biological role, catalyzes the initial step of the lipid cycle reactions in the biosynthesis of the cell wall peptidoglycan: transfers peptidoglycan precursor phospho-MurNAc-pentapeptide from UDP-MurNAc-pentapeptide onto the lipid carrier undecaprenyl phosphate, yielding undecaprenyl-pyrophosphoryl-MurNAc-pentapeptide, known as lipid I. The sequence is that of Phospho-N-acetylmuramoyl-pentapeptide-transferase from Shewanella sediminis (strain HAW-EB3).